The primary structure comprises 357 residues: Fructose-bisphosphate aldolase, cytoplasmic isozyme (357 aa).

Positions 53 and 142 each coordinate substrate. Glu183 (proton acceptor) is an active-site residue. The active-site Schiff-base intermediate with dihydroxyacetone-P is the Lys225.

It belongs to the class I fructose-bisphosphate aldolase family.

The protein resides in the cytoplasm. It carries out the reaction beta-D-fructose 1,6-bisphosphate = D-glyceraldehyde 3-phosphate + dihydroxyacetone phosphate. Its pathway is carbohydrate degradation; glycolysis; D-glyceraldehyde 3-phosphate and glycerone phosphate from D-glucose: step 4/4. This chain is Fructose-bisphosphate aldolase, cytoplasmic isozyme, found in Spinacia oleracea (Spinach).